The sequence spans 207 residues: MDNEKGLLIVLSGPSGVGKGTVRKRIFEDPSTSYKYSISMTTRQMREGEVDGVDYFFKTRDAFEALIKDDQFIEYAEYVGNYYGTPVQYVKDTMDEGHDVFLEIEVEGAKQVRKKFPDALFIFLAPPSLEHLRERLVGRGTESDEKIQSRINEARKEVEMMNLYDYVVVNDEVELAKNRIQCIVEAEHLKRERVEAKYRKMILEAKK.

The region spanning 6 to 185 (GLLIVLSGPS…AKNRIQCIVE (180 aa)) is the Guanylate kinase-like domain. Residue 13-20 (GPSGVGKG) participates in ATP binding.

This sequence belongs to the guanylate kinase family.

Its subcellular location is the cytoplasm. It catalyses the reaction GMP + ATP = GDP + ADP. Its function is as follows. Essential for recycling GMP and indirectly, cGMP. The chain is Guanylate kinase from Staphylococcus aureus (strain USA300).